Here is a 262-residue protein sequence, read N- to C-terminus: uncharacterized protein (262 aa).

Residues His-7, His-9, Glu-98, His-138, His-162, and Asp-212 each coordinate a divalent metal cation.

It belongs to the metallo-dependent hydrolases superfamily. TatD-type hydrolase family. A divalent metal cation is required as a cofactor.

This is an uncharacterized protein from Haemophilus influenzae (strain ATCC 51907 / DSM 11121 / KW20 / Rd).